The chain runs to 401 residues: Argininosuccinate synthase (401 aa).

An ATP-binding site is contributed by A8–S16. Y86 and S91 together coordinate L-citrulline. Residue G116 coordinates ATP. L-aspartate contacts are provided by T118, N122, and D123. N122 lines the L-citrulline pocket. Residues R126, S175, S184, E260, and Y272 each contribute to the L-citrulline site.

Belongs to the argininosuccinate synthase family. Type 1 subfamily. In terms of assembly, homotetramer.

The protein localises to the cytoplasm. It carries out the reaction L-citrulline + L-aspartate + ATP = 2-(N(omega)-L-arginino)succinate + AMP + diphosphate + H(+). Its pathway is amino-acid biosynthesis; L-arginine biosynthesis; L-arginine from L-ornithine and carbamoyl phosphate: step 2/3. The polypeptide is Argininosuccinate synthase (Clostridium kluyveri (strain ATCC 8527 / DSM 555 / NBRC 12016 / NCIMB 10680 / K1)).